The chain runs to 331 residues: MFSILYNLLEILVVLVPILLSVAFMTVIERKVMGSMQRRIGPNVVGYYALLQPFADALKLVIKEQVIPSQATKSLFFLAPMVTLIFSLLGWGVIPLGPGLALSDFSLGILYSLALSSIGVYGILFAGWSANSKYAFLGSLRSTAQMISYELIYSAAVLAVILLCGTFNITEIIESQQSVWYIMPLLPIFILFFVSALAETNRTPFDLPEAESELVAGFMTEHSGMIFVFFFLAEYGSIVLMSTFTAILFLGGYNMSPQVLFAEDSFINLQSIALAVKAVLIMFLFVWIRATLPRMRYDSLMTFCWTGMLPVAIALLILVPSLLIAFDISPY.

A run of 8 helical transmembrane segments spans residues 8-28, 75-95, 107-127, 147-167, 178-198, 224-244, 266-286, and 308-328; these read LLEI…MTVI, LFFL…GVIP, LGIL…LFAG, ISYE…CGTF, SVWY…SALA, GMIF…MSTF, FINL…FLFV, and MLPV…AFDI.

It belongs to the complex I subunit 1 family.

The protein localises to the mitochondrion inner membrane. It catalyses the reaction a ubiquinone + NADH + 5 H(+)(in) = a ubiquinol + NAD(+) + 4 H(+)(out). Functionally, core subunit of the mitochondrial membrane respiratory chain NADH dehydrogenase (Complex I) that is believed to belong to the minimal assembly required for catalysis. Complex I functions in the transfer of electrons from NADH to the respiratory chain. The immediate electron acceptor for the enzyme is believed to be ubiquinone. This Mycosarcoma maydis (Corn smut fungus) protein is NADH-ubiquinone oxidoreductase chain 1 (ND1).